The primary structure comprises 296 residues: Bidirectional sugar transporter SWEET13 (296 aa).

Residues 1–9 (MAGLSLQHP) are Extracellular-facing. Residues 10 to 30 (WAFAFGLLGNLISFTTYLAPI) form a helical membrane-spanning segment. Residues 13-98 (AFGLLGNLIS…VMYLAYAPKK (86 aa)) form the MtN3/slv 1 domain. Topologically, residues 31 to 45 (PTFYRIYKSKSTEGF) are cytoplasmic. A helical transmembrane segment spans residues 46 to 66 (QSVPYVVALFSAMLWIFYALI). The Extracellular portion of the chain corresponds to 67-71 (KSNEA). Residues 72 to 92 (LLITINAAGCVIETIYIVMYL) form a helical membrane-spanning segment. At 93–105 (AYAPKKAKVFTTK) the chain is on the cytoplasmic side. The helical transmembrane segment at 106–126 (ILLLLNVGVFGVILLLTLLLS) threads the bilayer. Topologically, residues 127-133 (HGEQRVV) are extracellular. Residues 134–154 (SLGWVCVAFSVSVFVAPLSII) traverse the membrane as a helical segment. The 84-residue stretch at 134 to 217 (SLGWVCVAFS…MGLYVFYMNA (84 aa)) folds into the MtN3/slv 2 domain. The Cytoplasmic portion of the chain corresponds to 155–167 (KRVIQSRSVEYMP). Residues 168-188 (FSLSLTLTLSAVVWFLYGLLI) form a helical membrane-spanning segment. Residues 189 to 192 (KDKY) are Extracellular-facing. Residues 193–213 (VALPNILGFTFGVVQMGLYVF) form a helical membrane-spanning segment. Topologically, residues 214–296 (YMNATPVAGE…PPRAVEVAAV (83 aa)) are cytoplasmic.

The protein belongs to the SWEET sugar transporter family. In terms of assembly, forms homooligomers and/or heterooligomers.

It localises to the cell membrane. In terms of biological role, mediates both low-affinity uptake and efflux of sugar across the plasma membrane. Its function is as follows. Confers blight susceptibility. Confers TAL effector-mediated susceptibility to Xanthomonas oryzae pv. oryzae. The chain is Bidirectional sugar transporter SWEET13 (SWEET13) from Oryza sativa subsp. japonica (Rice).